Reading from the N-terminus, the 74-residue chain is UPF0291 protein lmo0496 (74 aa).

It belongs to the UPF0291 family.

The protein localises to the cytoplasm. This chain is UPF0291 protein lmo0496, found in Listeria monocytogenes serovar 1/2a (strain ATCC BAA-679 / EGD-e).